Reading from the N-terminus, the 257-residue chain is Type III pantothenate kinase (257 aa).

6–13 lines the ATP pocket; the sequence is DCGNTNTV. 107-110 provides a ligand contact to substrate; the sequence is GPDR. Asp-109 serves as the catalytic Proton acceptor. Residue Asp-129 coordinates K(+). Residue Thr-132 participates in ATP binding. Thr-184 lines the substrate pocket.

Belongs to the type III pantothenate kinase family. As to quaternary structure, homodimer. Requires NH4(+) as cofactor. It depends on K(+) as a cofactor.

It is found in the cytoplasm. The enzyme catalyses (R)-pantothenate + ATP = (R)-4'-phosphopantothenate + ADP + H(+). The protein operates within cofactor biosynthesis; coenzyme A biosynthesis; CoA from (R)-pantothenate: step 1/5. Catalyzes the phosphorylation of pantothenate (Pan), the first step in CoA biosynthesis. The chain is Type III pantothenate kinase from Cereibacter sphaeroides (strain ATCC 17029 / ATH 2.4.9) (Rhodobacter sphaeroides).